Reading from the N-terminus, the 466-residue chain is uncharacterized protein (466 aa).

Belongs to the myoviridae tail sheath protein family.

This is an uncharacterized protein from Bacillus subtilis (strain 168).